Consider the following 39-residue polypeptide: Photosystem II reaction center protein L (39 aa).

A helical membrane pass occupies residues 18 to 38 (SLYLGLLSVFVLGILFSSYFF).

Belongs to the PsbL family. As to quaternary structure, PSII is composed of 1 copy each of membrane proteins PsbA, PsbB, PsbC, PsbD, PsbE, PsbF, PsbH, PsbI, PsbJ, PsbK, PsbL, PsbM, PsbT, PsbX, PsbY, Psb30/Ycf12, peripheral proteins PsbO, CyanoQ (PsbQ), PsbU, PsbV and a large number of cofactors. It forms dimeric complexes.

It is found in the cellular thylakoid membrane. One of the components of the core complex of photosystem II (PSII). PSII is a light-driven water:plastoquinone oxidoreductase that uses light energy to abstract electrons from H(2)O, generating O(2) and a proton gradient subsequently used for ATP formation. It consists of a core antenna complex that captures photons, and an electron transfer chain that converts photonic excitation into a charge separation. This subunit is found at the monomer-monomer interface and is required for correct PSII assembly and/or dimerization. This chain is Photosystem II reaction center protein L, found in Prochlorococcus marinus (strain MIT 9301).